The sequence spans 120 residues: Large ribosomal subunit protein uL14 (120 aa).

It belongs to the universal ribosomal protein uL14 family. In terms of assembly, part of the 50S ribosomal subunit. Forms a cluster with proteins L3 and L19. In the 70S ribosome, L14 and L19 interact and together make contacts with the 16S rRNA in bridges B5 and B8.

Binds to 23S rRNA. Forms part of two intersubunit bridges in the 70S ribosome. The protein is Large ribosomal subunit protein uL14 of Aster yellows witches'-broom phytoplasma (strain AYWB).